A 75-amino-acid chain; its full sequence is UPF0352 protein YejL (75 aa).

The protein belongs to the UPF0352 family.

This Escherichia coli O139:H28 (strain E24377A / ETEC) protein is UPF0352 protein YejL.